The following is a 186-amino-acid chain: Ribosome-recycling factor (186 aa).

It belongs to the RRF family.

It is found in the cytoplasm. In terms of biological role, responsible for the release of ribosomes from messenger RNA at the termination of protein biosynthesis. May increase the efficiency of translation by recycling ribosomes from one round of translation to another. This chain is Ribosome-recycling factor, found in Rubrobacter xylanophilus (strain DSM 9941 / JCM 11954 / NBRC 16129 / PRD-1).